We begin with the raw amino-acid sequence, 397 residues long: DnaJ protein homolog 1 (397 aa).

In terms of domain architecture, J spans 1–52 (KNASPDDLKKAYRKAAIKNHPDKGGDPEKFKELAQAYDVLSDPEKREIYDQY). A CR-type zinc finger spans residues 114–198 (GTSKKLSLSR…CKGEKVVQEK (85 aa)). CXXCXGXG motif repeat units lie at residues 127 to 134 (CSKCNGKG), 143 to 150 (CASCQGSG), 170 to 177 (CNDCKGTG), and 186 to 193 (CPLCKGEK). Residues 367 to 397 (MRRKQHQHAQEAYDEDDEGHGGGQRVQCAQQ) are disordered. Cysteine methyl ester is present on C394. The S-farnesyl cysteine moiety is linked to residue C394. A propeptide spans 395–397 (AQQ) (removed in mature form).

Its subcellular location is the membrane. Its function is as follows. Plays a continuous role in plant development probably in the structural organization of compartments. In Allium porrum (Leek), this protein is DnaJ protein homolog 1 (DNAJ1).